The chain runs to 398 residues: Acetate kinase (398 aa).

Asn8 serves as a coordination point for Mg(2+). Lys15 contributes to the ATP binding site. Arg89 is a substrate binding site. Asp146 (proton donor/acceptor) is an active-site residue. ATP-binding positions include His206–Gly210, Asp283–Arg285, and Gly331–Asn335. Glu383 is a binding site for Mg(2+).

The protein belongs to the acetokinase family. Homodimer. Mg(2+) is required as a cofactor. It depends on Mn(2+) as a cofactor.

It localises to the cytoplasm. The catalysed reaction is acetate + ATP = acetyl phosphate + ADP. It functions in the pathway metabolic intermediate biosynthesis; acetyl-CoA biosynthesis; acetyl-CoA from acetate: step 1/2. Catalyzes the formation of acetyl phosphate from acetate and ATP. Can also catalyze the reverse reaction. The polypeptide is Acetate kinase (Streptococcus pyogenes serotype M1).